The primary structure comprises 220 residues: VQ motif-containing protein 5 (220 aa).

Positions 49-57 match the VQ motif; sequence FKSLVQQLT. Disordered regions lie at residues 61-80 and 131-171; these read PCDR…PEPI and HMMA…GASS. 2 stretches are compositionally biased toward polar residues: residues 133-150 and 157-171; these read MAQS…QSNG and SWFN…GASS.

The protein resides in the nucleus. May function as negative regulator of plant defense. The chain is VQ motif-containing protein 5 from Arabidopsis thaliana (Mouse-ear cress).